A 375-amino-acid polypeptide reads, in one-letter code: uncharacterized protein (375 aa).

Lysine 99 participates in a covalent cross-link: Isoglutamyl lysine isopeptide (Lys-Gln) (interchain with Q-Cter in protein Pup).

The protein belongs to the IMPDH/GMPR family.

This is an uncharacterized protein from Mycolicibacterium smegmatis (strain ATCC 700084 / mc(2)155) (Mycobacterium smegmatis).